The following is a 591-amino-acid chain: Negative elongation factor D (591 aa).

Positions 1 to 44 are disordered; that stretch reads MAGPAPGTIMGEDYFGNASEWGEEADGGQHQEDDSGEGEDDAEV. Acidic residues predominate over residues 34-44; it reads DSGEGEDDAEV.

Belongs to the NELF-D family. In terms of assembly, the NELF complex is composed of NELFA, NELFB, NELFCD and NELFE; NELFA and NELFCD form a stable subcomplex that binds primarily through NELFCD to the N-terminus of NELFB. Binds RNA which may help to stabilize the NELF complex on nucleic acid. In vitro, the NELFA:NELFCD subcomplex binds to ssDNA and ssRNA in a sequence- and structure-dependent manner. Interacts with ARAF1. Interacts with PCF11. Interacts with NELFB. Interacts with KAT8.

It is found in the nucleus. In terms of biological role, essential component of the NELF complex, a complex that negatively regulates the elongation of transcription by RNA polymerase II. The NELF complex, which acts via an association with the DSIF complex and causes transcriptional pausing, is counteracted by the P-TEFb kinase complex. The chain is Negative elongation factor D (Nelfcd) from Mus musculus (Mouse).